The following is a 448-amino-acid chain: Probable sodium-coupled neutral amino acid transporter 6 (448 aa).

2 stretches are compositionally biased toward polar residues: residues 1–12 (MQASDSSINTLD) and 26–36 (LLANSPQRRSS). Residues 1 to 36 (MQASDSSINTLDGHQVSAGRDESTPLLANSPQRRSS) are disordered. 5 helical membrane passes run 40 to 60 (SFGF…ILGL), 69 to 89 (ILGF…SIHL), 117 to 137 (LVAC…LFII), 164 to 184 (LLII…KIGF), and 185 to 205 (LGYT…VIVI). An intrachain disulfide couples cysteine 212 to cysteine 232. Asparagine 218 and asparagine 228 each carry an N-linked (GlcNAc...) asparagine glycan. 6 helical membrane-spanning segments follow: residues 244 to 264 (AFAL…LPIY), 281 to 301 (VGIA…YLTF), 321 to 341 (VLII…VPLI), 365 to 385 (ILVT…VPDM), 388 to 408 (VFGV…PGLF), and 425 to 445 (ACGL…LIIM).

This sequence belongs to the amino acid/polyamine transporter 2 family.

The protein resides in the cell membrane. Probable sodium-dependent amino acid/proton antiporter, could be a neuronal transporter for glutamate. The chain is Probable sodium-coupled neutral amino acid transporter 6 (slc38a6) from Xenopus tropicalis (Western clawed frog).